Reading from the N-terminus, the 421-residue chain is Esterase LipQ (421 aa).

Catalysis depends on residues S249, D344, and H377.

It belongs to the 'GDXG' lipolytic enzyme family.

It catalyses the reaction hexadecanoate ester + H2O = an aliphatic alcohol + hexadecanoate + H(+). Functionally, shows lipase activity. Is highly immunogenic and may play an important role in the virulence and pathogenesis of M.tuberculosis infection, by altering the balance of cytokines. Significantly down-regulates the expression level of pro-inflammatory cytokines (TNF-alpha and IFN-gamma) and up-regulates the level of anti-inflammatory cytokines such as IL-4 and IL-10 as compared to LPS stimulated macrophages. Also inhibits the expression of iNOS, TLR2 and transcription factor NF-kappa-B in LPS stimulated macrophages whereas the expression of TLR-4 remains unchanged. This chain is Esterase LipQ, found in Mycobacterium tuberculosis (strain ATCC 25618 / H37Rv).